We begin with the raw amino-acid sequence, 413 residues long: Zeaxanthin glucosyltransferase (413 aa).

This sequence belongs to the UDP-glycosyltransferase family.

The catalysed reaction is all-trans-zeaxanthin + 2 UDP-alpha-D-glucose = zeaxanthin bis(beta-D-glucoside) + 2 UDP + 2 H(+). It functions in the pathway carotenoid biosynthesis; zeaxanthin diglucoside biosynthesis. Functionally, catalyzes the glycosylation reaction which converts zeaxanthin to zeaxanthin bis(beta-D-glucoside). The reaction proceeds in two steps with the monoglucoside as an intermediate. This is Zeaxanthin glucosyltransferase (crtX) from Pseudescherichia vulneris (Escherichia vulneris).